The chain runs to 304 residues: Probable alpha-L-glutamate ligase 2 (304 aa).

Positions 107-290 constitute an ATP-grasp domain; sequence HQLLARKGVG…IAGAIIDYIV (184 aa). ATP-binding positions include Lys144, 181-182, Asp190, and 214-216; these read EF and RSN. The Mg(2+) site is built by Asp251, Glu263, and Asn265. Mn(2+) contacts are provided by Asp251, Glu263, and Asn265.

The protein belongs to the RimK family. Mg(2+) serves as cofactor. The cofactor is Mn(2+).

The polypeptide is Probable alpha-L-glutamate ligase 2 (Hahella chejuensis (strain KCTC 2396)).